The following is a 427-amino-acid chain: Glutamate-1-semialdehyde 2,1-aminomutase (427 aa).

Lys-265 carries the post-translational modification N6-(pyridoxal phosphate)lysine.

It belongs to the class-III pyridoxal-phosphate-dependent aminotransferase family. HemL subfamily. As to quaternary structure, homodimer. It depends on pyridoxal 5'-phosphate as a cofactor.

It localises to the cytoplasm. The enzyme catalyses (S)-4-amino-5-oxopentanoate = 5-aminolevulinate. Its pathway is porphyrin-containing compound metabolism; protoporphyrin-IX biosynthesis; 5-aminolevulinate from L-glutamyl-tRNA(Glu): step 2/2. This Pseudomonas syringae pv. tomato (strain ATCC BAA-871 / DC3000) protein is Glutamate-1-semialdehyde 2,1-aminomutase.